Here is a 33-residue protein sequence, read N- to C-terminus: Protamine (33 aa).

The interval 1-33 (MPRRRRSSSRPVRRRRRPRVSRRRRRRGGRRRR) is disordered.

As to expression, testis.

It localises to the nucleus. Its subcellular location is the chromosome. Protamines substitute for histones in the chromatin of sperm during the haploid phase of spermatogenesis. They compact sperm DNA into a highly condensed, stable and inactive complex. This is Protamine from Oncorhynchus keta (Chum salmon).